Reading from the N-terminus, the 367-residue chain is Glutamate 5-kinase (367 aa).

Lys10 is an ATP binding site. The substrate site is built by Ser50, Asp137, and Asn149. Residues 169–170 (TD) and 211–217 (TGGMSTK) contribute to the ATP site. The region spanning 275-353 (AGEITVDDGA…QQIAEILGYE (79 aa)) is the PUA domain.

The protein belongs to the glutamate 5-kinase family.

The protein resides in the cytoplasm. The enzyme catalyses L-glutamate + ATP = L-glutamyl 5-phosphate + ADP. It functions in the pathway amino-acid biosynthesis; L-proline biosynthesis; L-glutamate 5-semialdehyde from L-glutamate: step 1/2. Functionally, catalyzes the transfer of a phosphate group to glutamate to form L-glutamate 5-phosphate. The protein is Glutamate 5-kinase of Pectobacterium atrosepticum (strain SCRI 1043 / ATCC BAA-672) (Erwinia carotovora subsp. atroseptica).